A 371-amino-acid chain; its full sequence is MCAKKIVVLPGDHIGPEIVASALEVLKVVEKKRPELKLEFEEHKIGGASIDAYGTPLTDETVKACLEADGVLLGAVGGPEWTNPNCRPEQGLLKLRKSMGVWANLRPCNFASKSLVKYSPLKPEIVEGVDFCVVRELTGGCYFGERTEDNGSGYAMDTWPYSLEEVSRIARLAAWLAETSNPPAPVTLLDKANVLATSRLWRKTVAKIFKEEYPHLTLKNQLIDSAAMLLVKSPRTLNGVVLTDNLFGDIISDEASVIPGSLGLLPSASLSGVVGKSEEKVHCLVEPIHGSAPDIAGKGIVNPVGTILSASLLLRYGLNAPKEAEAIEAAVRKVLDDTSIGGRGLYTRDLGGEASTADITKAVVEELEKIL.

Phosphothreonine is present on Thr55. 78 to 89 (GPEWTNPNCRPE) serves as a coordination point for NAD(+). 4 residues coordinate substrate: Arg96, Arg106, Arg135, and Asp224. Mg(2+) contacts are provided by Asp224, Asp249, and Asp253. NAD(+) is bound at residue 290–302 (GSAPDIAGKGIVN).

It belongs to the isocitrate and isopropylmalate dehydrogenases family. As to quaternary structure, homodimer. Mg(2+) serves as cofactor. It depends on Mn(2+) as a cofactor.

The protein localises to the cytoplasm. It carries out the reaction (2R,3S)-3-isopropylmalate + NAD(+) = 4-methyl-2-oxopentanoate + CO2 + NADH. It participates in amino-acid biosynthesis; L-leucine biosynthesis; L-leucine from 3-methyl-2-oxobutanoate: step 3/4. Catalyzes the oxidation of 3-carboxy-2-hydroxy-4-methylpentanoate (3-isopropylmalate) to 3-carboxy-4-methyl-2-oxopentanoate. The product decarboxylates to 4-methyl-2 oxopentanoate. This is 3-isopropylmalate dehydrogenase (leu1) from Schizosaccharomyces pombe (strain 972 / ATCC 24843) (Fission yeast).